The primary structure comprises 380 residues: Cytochrome b (380 aa).

4 consecutive transmembrane segments (helical) span residues 33 to 53, 77 to 98, 113 to 133, and 178 to 198; these read FGSL…FLAM, WFIR…YLHI, WTIG…GYVL, and FFTF…VHLL. 2 residues coordinate heme b: histidine 83 and histidine 97. The heme b site is built by histidine 182 and histidine 196. Residue histidine 201 coordinates a ubiquinone. 4 helical membrane-spanning segments follow: residues 226 to 246, 288 to 308, 320 to 340, and 347 to 367; these read YKDL…ALFS, LGGV…PILH, LTQT…WIGG, and FVII…VLAP.

Belongs to the cytochrome b family. The cytochrome bc1 complex contains 3 respiratory subunits (MT-CYB, CYC1 and UQCRFS1), 2 core proteins (UQCRC1 and UQCRC2) and probably 6 low-molecular weight proteins. Requires heme b as cofactor.

Its subcellular location is the mitochondrion inner membrane. In terms of biological role, component of the ubiquinol-cytochrome c reductase complex (complex III or cytochrome b-c1 complex) that is part of the mitochondrial respiratory chain. The b-c1 complex mediates electron transfer from ubiquinol to cytochrome c. Contributes to the generation of a proton gradient across the mitochondrial membrane that is then used for ATP synthesis. This is Cytochrome b (mt-cyb) from Lampris guttatus (Opah).